An 87-amino-acid chain; its full sequence is Small ribosomal subunit protein uS15 (87 aa).

Residues 1-19 show a composition bias toward basic and acidic residues; the sequence is MDKAKKQELMAKHARHEGD. A disordered region spans residues 1-23; that stretch reads MDKAKKQELMAKHARHEGDTGSP.

Belongs to the universal ribosomal protein uS15 family. As to quaternary structure, part of the 30S ribosomal subunit. Forms a bridge to the 50S subunit in the 70S ribosome, contacting the 23S rRNA.

One of the primary rRNA binding proteins, it binds directly to 16S rRNA where it helps nucleate assembly of the platform of the 30S subunit by binding and bridging several RNA helices of the 16S rRNA. In terms of biological role, forms an intersubunit bridge (bridge B4) with the 23S rRNA of the 50S subunit in the ribosome. The protein is Small ribosomal subunit protein uS15 of Clostridium botulinum (strain Loch Maree / Type A3).